The sequence spans 346 residues: D-amino-acid oxidase (346 aa).

Residues G22, I24, T52, T53, S54, A58, A59, L60, and T187 each contribute to the FAD site. D-proline is bound by residues Y227 and R284. Y227 and R284 together coordinate D-serine. Residues R284, G311, G312, G314, and T316 each coordinate FAD. R284 is a binding site for D-dopa. A D-proline-binding site is contributed by G312. G312 contributes to the D-serine binding site. Residue G312 coordinates D-dopa. The Microbody targeting signal motif lies at 344–346; it reads SKL.

This sequence belongs to the DAMOX/DASOX family. The cofactor is FAD.

The protein localises to the peroxisome matrix. It catalyses the reaction a D-alpha-amino acid + O2 + H2O = a 2-oxocarboxylate + H2O2 + NH4(+). The catalysed reaction is D-serine + O2 + H2O = 3-hydroxypyruvate + H2O2 + NH4(+). The enzyme catalyses D-phenylalanine + O2 + H2O = 3-phenylpyruvate + H2O2 + NH4(+). It carries out the reaction D-alanine + O2 + H2O = pyruvate + H2O2 + NH4(+). It catalyses the reaction D-arginine + O2 + H2O = 5-guanidino-2-oxopentanoate + H2O2 + NH4(+). The catalysed reaction is D-methionine + O2 + H2O = 4-methylsulfanyl-2-oxobutanoate + H2O2 + NH4(+). The enzyme catalyses D-ornithine + O2 + H2O = 5-amino-2-oxopentanoate + H2O2 + NH4(+). It carries out the reaction D-leucine + O2 + H2O = 4-methyl-2-oxopentanoate + H2O2 + NH4(+). It catalyses the reaction D-lysine + O2 + H2O = 6-amino-2-oxohexanoate + H2O2 + NH4(+). The catalysed reaction is D-proline + O2 = 1-pyrroline-2-carboxylate + H2O2. The enzyme catalyses D-valine + O2 + H2O = 3-methyl-2-oxobutanoate + H2O2 + NH4(+). It carries out the reaction D-histidine + O2 + H2O = 3-(imidazol-5-yl)pyruvate + H2O2 + NH4(+). Catalyzes the oxidative deamination of D-amino acids with broad substrate specificity. Has low in vitro and no in vivo activity on D-serine; primary D-serine degradation is performed by the D-serine dehydratase dsd. The sequence is that of D-amino-acid oxidase (ddo-1) from Dictyostelium discoideum (Social amoeba).